A 312-amino-acid polypeptide reads, in one-letter code: Serine/threonine-protein phosphatase PP1 isozyme 5 (312 aa).

The residue at position 2 (Ala-2) is an N-acetylalanine. 4 residues coordinate Mn(2+): Asp-70, His-72, Asp-98, and Asn-130. The Proton donor role is filled by His-131. Mn(2+)-binding residues include His-179 and His-254.

It belongs to the PPP phosphatase family. PP-1 subfamily. It depends on Mn(2+) as a cofactor.

It is found in the nucleus. The protein localises to the cytoplasm. It catalyses the reaction O-phospho-L-seryl-[protein] + H2O = L-seryl-[protein] + phosphate. The catalysed reaction is O-phospho-L-threonyl-[protein] + H2O = L-threonyl-[protein] + phosphate. With respect to regulation, phosphatase activity is strongly reduced by the protein phosphatase inhibitor 2 (I-2). Functionally, serine/threonine-protein phosphatase that possesses phosphatase activity toward para-nitrophenyl phosphate (pNPP) in vitro. The polypeptide is Serine/threonine-protein phosphatase PP1 isozyme 5 (Arabidopsis thaliana (Mouse-ear cress)).